The primary structure comprises 369 residues: Histidinol-phosphate aminotransferase (369 aa).

K223 carries the N6-(pyridoxal phosphate)lysine modification.

It belongs to the class-II pyridoxal-phosphate-dependent aminotransferase family. Histidinol-phosphate aminotransferase subfamily. Homodimer. It depends on pyridoxal 5'-phosphate as a cofactor.

The enzyme catalyses L-histidinol phosphate + 2-oxoglutarate = 3-(imidazol-4-yl)-2-oxopropyl phosphate + L-glutamate. It functions in the pathway amino-acid biosynthesis; L-histidine biosynthesis; L-histidine from 5-phospho-alpha-D-ribose 1-diphosphate: step 7/9. Catalyzes the conversion of imidazole acetol phosphate to histidinol phosphate. Can also transaminate aromatic amino acids and histidine in addition to histidinol phosphate. This is Histidinol-phosphate aminotransferase from Zymomonas mobilis subsp. mobilis (strain ATCC 31821 / ZM4 / CP4).